A 283-amino-acid chain; its full sequence is Homeobox protein Hox-C12b (283 aa).

Positions 215 to 274 (TRKKRKPYSKLQLNELEGEFILNEFITRQRRRELSDRLNLTDQQVKIWFQNRRMKKKRLL) form a DNA-binding region, homeobox.

The protein belongs to the Abd-B homeobox family.

It is found in the nucleus. Functionally, sequence-specific transcription factor which is part of a developmental regulatory system that provides cells with specific positional identities on the anterior-posterior axis. The protein is Homeobox protein Hox-C12b (hoxc12b) of Danio rerio (Zebrafish).